The following is a 1008-amino-acid chain: Kinesin-like protein KIN-5C (1008 aa).

One can recognise a Kinesin motor domain in the interval 12 to 359 (NVQVLLRCRP…LDYAHRAKSI (348 aa)). 98-105 (GQTGTGKT) is a binding site for ATP. Positions 402 to 459 (KDRYQQEENERKAMADQIEQMTTSLEANQKQINDLQEKYDSELQHSADLSKKLEATEK) form a coiled coil. 3 disordered regions span residues 910–931 (VEAHLGESQHLQESHSSHTAGI), 943–962 (YKDYEPTGETPVRSEPEVPS), and 975–1008 (ESLMDEFRENHPYEPSKDRRPSLIPRSPLATINN). Positions 913–925 (HLGESQHLQESHS) are enriched in basic and acidic residues. Residues 979–995 (DEFRENHPYEPSKDRRP) show a composition bias toward basic and acidic residues.

It belongs to the TRAFAC class myosin-kinesin ATPase superfamily. Kinesin family. KIN-5/BimC subfamily.

The protein resides in the cytoplasm. Its subcellular location is the cytoskeleton. The protein localises to the spindle. In terms of biological role, responsible for microtubule translocation. May be important for the organization of phragmoplast-specific arrays of microtubules. Plays an essential role in stabilizing the mitotic spindle. Required during mitotic cytokinesis. This chain is Kinesin-like protein KIN-5C, found in Oryza sativa subsp. japonica (Rice).